We begin with the raw amino-acid sequence, 262 residues long: Putative glycyl-radical enzyme activating enzyme HI_0520 (262 aa).

The Radical SAM core domain occupies 20-262 (VEGQGNRSSI…CGINKILTIL (243 aa)). Residues C34, C38, and C41 each coordinate [4Fe-4S] cluster. Residues 40-42 (YCH), G81, and 130-132 (DLK) contribute to the S-adenosyl-L-methionine site.

This sequence belongs to the organic radical-activating enzymes family. Requires [4Fe-4S] cluster as cofactor.

It carries out the reaction glycyl-[protein] + reduced [flavodoxin] + S-adenosyl-L-methionine = glycin-2-yl radical-[protein] + semiquinone [flavodoxin] + 5'-deoxyadenosine + L-methionine + H(+). This chain is Putative glycyl-radical enzyme activating enzyme HI_0520, found in Haemophilus influenzae (strain ATCC 51907 / DSM 11121 / KW20 / Rd).